The chain runs to 229 residues: GTP cyclohydrolase 1 (229 aa).

Residues Cys116, His119, and Cys187 each coordinate Zn(2+).

It belongs to the GTP cyclohydrolase I family. In terms of assembly, toroid-shaped homodecamer, composed of two pentamers of five dimers.

The enzyme catalyses GTP + H2O = 7,8-dihydroneopterin 3'-triphosphate + formate + H(+). It participates in cofactor biosynthesis; 7,8-dihydroneopterin triphosphate biosynthesis; 7,8-dihydroneopterin triphosphate from GTP: step 1/1. The chain is GTP cyclohydrolase 1 from Synechococcus sp. (strain JA-3-3Ab) (Cyanobacteria bacterium Yellowstone A-Prime).